Reading from the N-terminus, the 425-residue chain is MSRNLELFERGKQVIPGGVNSPVRAFGQVGGTPRFVARAEGAYFWDADGKQYLDYVGSWGPAIVGHAHPEVVKAVQDAAVGGLSFGAPTEGEVVIAEEICKLLPSVEQVRLVSSGTEATMTAIRLARGFTGRDLIVKFEGCYHGHSDSLLVKAGSGLLTFGNPSSGGVPADFTKHTLVLQYNDVEQLSRTFAEIGDKIACVILEPIAGNMNLIQPSREFVQALRQLTEKHGAVLIYDEVMTGFRVAKGCAQGLHGVTPDLTTLGKVVGGGMPLAAFGGRADIMGKIAPLGTVYQAGTLSGNPLSVAAGLATLKLIQQPGFYETLGSRTARLAQGLAEEARKAGVTLSTDSVGGMFGFYFSDKAPKSYAEATGCDIERFKRFFHAMLDEGVYFAPSAYEAGFVSAAHSEQMIESTLAAAGRAFARL.

At Lys-265 the chain carries N6-(pyridoxal phosphate)lysine.

It belongs to the class-III pyridoxal-phosphate-dependent aminotransferase family. HemL subfamily. Homodimer. Pyridoxal 5'-phosphate serves as cofactor.

It localises to the cytoplasm. The catalysed reaction is (S)-4-amino-5-oxopentanoate = 5-aminolevulinate. It functions in the pathway porphyrin-containing compound metabolism; protoporphyrin-IX biosynthesis; 5-aminolevulinate from L-glutamyl-tRNA(Glu): step 2/2. This is Glutamate-1-semialdehyde 2,1-aminomutase from Chromobacterium violaceum (strain ATCC 12472 / DSM 30191 / JCM 1249 / CCUG 213 / NBRC 12614 / NCIMB 9131 / NCTC 9757 / MK).